The following is a 4731-amino-acid chain: Dynein axonemal heavy chain 8 (4731 aa).

Residues 1–145 (MESEEGNAEP…SKFRRSMTGI (145 aa)) form a disordered region. Residues 9 to 55 (EPPPPSEEAPPPVVEEAPPPLPPEDTAPPPPEEQAPPPEGDAAPPPT) show a composition bias toward pro residues. Positions 66–75 (EAPHPEDPKL) are enriched in basic and acidic residues. Over residues 94 to 106 (SDEEVTLPEDEES) the composition is skewed to acidic residues. A compositionally biased stretch (polar residues) spans 122-133 (SVLSDGISQSSR). Positions 145–169 (IPNLQETLKEKQARFREARENRKMK) form a coiled coil. S917 carries the phosphoserine modification. Positions 1177–1201 (FQNNSRGSDQPPASGKPLKKEERSF) are disordered. Residues 1543 to 1567 (DVDIEKINAELQEFQNRCRKLPRAL) are a coiled coil. AAA stretches follow at residues 2049-2271 (YQNE…VLRT), 2331-2550 (SAVD…KLSL), 2657-2910 (FYPT…IWQG), and 3021-3275 (QFNE…YRRR). Residues 2087–2094 (GPAGTGKT) and 2369–2376 (GPSGSGKT) contribute to the ATP site. The segment at 3290–3587 (YKSIYTDKVK…MDLLNDADMC (298 aa)) is stalk. 3 coiled-coil regions span residues 3313–3405 (DKLM…ALNT), 3531–3583 (LKAN…LLND), and 3836–3871 (RVILTEKQELESERVKLLEDVTFNKRKMKELEDNLL). AAA stretches follow at residues 3673–3903 (LVDP…EVSE) and 4118–4332 (ARKY…FIQN).

Belongs to the dynein heavy chain family. In terms of assembly, consists of at least two heavy chains and a number of intermediate and light chains. Isoform 1 and/or isoform 2 are expressed in spermatocytes and mature sperm (at protein level). Testis-specific. Accumulates exclusively in mid to late spermatocytes.

The protein resides in the cytoplasm. It is found in the cytoskeleton. The protein localises to the flagellum axoneme. Functionally, force generating protein component of the outer dynein arms (ODAs) in the sperm flagellum. Produces force towards the minus ends of microtubules. Dynein has ATPase activity; the force-producing power stroke is thought to occur on release of ADP. Involved in sperm motility; implicated in sperm flagellar assembly. The polypeptide is Dynein axonemal heavy chain 8 (Dnah8) (Mus musculus (Mouse)).